Consider the following 27-residue polypeptide: SFREQCVPGREITYECLNACAEYAVRQ.

Belongs to the protease inhibitor I6 (cereal trypsin/alpha-amylase inhibitor) family.

It localises to the secreted. In Triticum aestivum (Wheat), this protein is Allergen C-C.